The chain runs to 236 residues: Small ribosomal subunit protein uS3 (236 aa).

Positions 39–112 constitute a KH type-2 domain; it reads IREFITKHPK…RINLKVEEVG (74 aa). A disordered region spans residues 212–236; sequence YGDDNDGADAQTGQASKKPKRSYKR.

It belongs to the universal ribosomal protein uS3 family. Part of the 30S ribosomal subunit. Forms a tight complex with proteins S10 and S14.

Binds the lower part of the 30S subunit head. Binds mRNA in the 70S ribosome, positioning it for translation. The sequence is that of Small ribosomal subunit protein uS3 from Rhodopirellula baltica (strain DSM 10527 / NCIMB 13988 / SH1).